Here is a 224-residue protein sequence, read N- to C-terminus: Non-structural protein V (224 aa).

Residues lysine 55–glutamine 65 show a composition bias toward polar residues. Disordered stretches follow at residues lysine 55–glycine 90 and threonine 145–arginine 172. Residues histidine 170, cysteine 189, cysteine 193, cysteine 205, cysteine 207, cysteine 210, cysteine 214, and cysteine 217 each coordinate Zn(2+).

The protein belongs to the paramyxoviruses V protein family. In terms of assembly, interacts with host IFIH1/MDA5 and DHX58/LGP2. Forms with host DDB1, CUL4A, STAT1, STAT2 and STAT3 the mumps virus V-dependent complex (VDC).

The protein resides in the virion. The protein localises to the host cytoplasm. Its function is as follows. Plays an essential role in the inhibition of host immune response. Prevents the establishment of cellular antiviral state by blocking interferon-alpha/beta (IFN-alpha/beta) production and signaling pathway. Interacts with host IFIH1/MDA5 and DHX58/LGP2 to inhibit the transduction pathway involved in the activation of IFN-beta promoter, thus protecting the virus against cell antiviral state. Blocks the type I and II interferon signaling pathways by interacting with host STAT1, STAT2 and STAT3, and mediating their ubiquitination and subsequent proteasomal degradation. This chain is Non-structural protein V, found in Mumps virus genotype B (strain Miyahara vaccine) (MuV).